An 840-amino-acid chain; its full sequence is Subtilisin-like protease SBT2.3 (840 aa).

The signal sequence occupies residues 1–27; that stretch reads MVRVMLVRFGFLLLMISFVFLSNNTLG. Positions 28-146 are cleaved as a propeptide — activation peptide; it reads QQQDDDDDSA…IVLDYSVRTA (119 aa). The 109-residue stretch at 38-146 folds into the Inhibitor I9 domain; that stretch reads VYIVTLKQPP…IVLDYSVRTA (109 aa). Residues 61–81 show a composition bias toward basic residues; that stretch reads KSKFTPKLRPRNNSRKRHGKS. A disordered region spans residues 61 to 85; sequence KSKFTPKLRPRNNSRKRHGKSKIPS. N72 carries an N-linked (GlcNAc...) asparagine glycan. A Peptidase S8 domain is found at 148–694; it reads TYTPQFMGLP…SGFVNATAAL (547 aa). D180 functions as the Charge relay system in the catalytic mechanism. Residues N193 and N241 are each glycosylated (N-linked (GlcNAc...) asparagine). The active-site Charge relay system is the H255. N-linked (GlcNAc...) asparagine glycans are attached at residues N398, N427, N480, N525, and N553. In terms of domain architecture, PA spans 418–513; sequence MISAFHALNN…MDMPGIIIPS (96 aa). The active-site Charge relay system is the S619. N-linked (GlcNAc...) asparagine glycans are attached at residues N689, N715, N723, N767, and N808.

Belongs to the peptidase S8 family.

The protein localises to the secreted. The protein is Subtilisin-like protease SBT2.3 of Arabidopsis thaliana (Mouse-ear cress).